Reading from the N-terminus, the 293-residue chain is Glutamyl-Q tRNA(Asp) synthetase (293 aa).

L-glutamate-binding positions include R4–S8 and E40. The 'HIGH' region signature appears at P7 to N17. Positions 92, 94, 113, and 117 each coordinate Zn(2+). L-glutamate contacts are provided by Y180 and R198. The short motif at R236–R240 is the 'KMSKS' region element. K239 is an ATP binding site.

It belongs to the class-I aminoacyl-tRNA synthetase family. GluQ subfamily. Zn(2+) is required as a cofactor.

Its function is as follows. Catalyzes the tRNA-independent activation of glutamate in presence of ATP and the subsequent transfer of glutamate onto a tRNA(Asp). Glutamate is transferred on the 2-amino-5-(4,5-dihydroxy-2-cyclopenten-1-yl) moiety of the queuosine in the wobble position of the QUC anticodon. The sequence is that of Glutamyl-Q tRNA(Asp) synthetase from Corynebacterium glutamicum (strain ATCC 13032 / DSM 20300 / JCM 1318 / BCRC 11384 / CCUG 27702 / LMG 3730 / NBRC 12168 / NCIMB 10025 / NRRL B-2784 / 534).